The following is a 431-amino-acid chain: Septin-11 (431 aa).

Ala2 bears the N-acetylalanine mark. Phosphoserine is present on Ser9. The region spanning 38-304 is the Septin-type G domain; that stretch reads QGFCFNILCV…ELYRRCKLEE (267 aa). A G1 motif region spans residues 48–55; it reads GETGIGKS. GTP is bound by residues 48-55, Gly103, 184-192, Gly238, and Arg253; these read GETGIGKS and KADTIAKNE. The segment at 100–103 is G3 motif; that stretch reads DTVG. The G4 motif stretch occupies residues 183-186; it reads AKAD. Residues 320–413 adopt a coiled-coil conformation; the sequence is QETYEAKRNE…LLQSQAQQSG (94 aa). The interval 400 to 431 is disordered; it reads AAAQLLQSQAQQSGAQQTKKDKDKKNPWLCTE. A compositionally biased stretch (low complexity) spans 401 to 416; that stretch reads AAQLLQSQAQQSGAQQ.

It belongs to the TRAFAC class TrmE-Era-EngA-EngB-Septin-like GTPase superfamily. Septin GTPase family. Septins polymerize into heterooligomeric protein complexes that form filaments, and can associate with cellular membranes, actin filaments and microtubules. Forms homooligomers. GTPase activity is required for filament formation. Interacts with SEPTIN7, SEPTIN9 and SEPTIN12. Expressed in the cerebral cortex (at protein level).

The protein localises to the cytoplasm. It localises to the cytoskeleton. It is found in the synapse. The protein resides in the cell projection. Its subcellular location is the dendritic spine. The protein localises to the axon. Its function is as follows. Filament-forming cytoskeletal GTPase. May play a role in cytokinesis (Potential). May play a role in the cytoarchitecture of neurons, including dendritic arborization and dendritic spines, and in GABAergic synaptic connectivity. This chain is Septin-11, found in Mus musculus (Mouse).